Reading from the N-terminus, the 22-residue chain is Superoxide dismutase [Cu-Zn] (22 aa).

Belongs to the Cu-Zn superoxide dismutase family. As to quaternary structure, homodimer. Cu cation is required as a cofactor. Zn(2+) serves as cofactor.

It is found in the cytoplasm. It carries out the reaction 2 superoxide + 2 H(+) = H2O2 + O2. Functionally, destroys radicals which are normally produced within the cells and which are toxic to biological systems. The sequence is that of Superoxide dismutase [Cu-Zn] from Hordeum vulgare (Barley).